The sequence spans 182 residues: Large ribosomal subunit protein bL25 (182 aa).

Belongs to the bacterial ribosomal protein bL25 family. CTC subfamily. As to quaternary structure, part of the 50S ribosomal subunit; part of the 5S rRNA/L5/L18/L25 subcomplex. Contacts the 5S rRNA. Binds to the 5S rRNA independently of L5 and L18.

This is one of the proteins that binds to the 5S RNA in the ribosome where it forms part of the central protuberance. This Borrelia garinii subsp. bavariensis (strain ATCC BAA-2496 / DSM 23469 / PBi) (Borreliella bavariensis) protein is Large ribosomal subunit protein bL25.